Here is a 427-residue protein sequence, read N- to C-terminus: Endothelin-1 receptor (427 aa).

Positions 1–20 (METFWLRVSFWVALVGGVIS) are cleaved as a signal peptide. The Extracellular segment spans residues 21–80 (DNPESYSTNLSIHVDSVTTFRGTELSFVVTTHQPTNLALPSNGSMHNYCPQQTKITSAFK). N-linked (GlcNAc...) asparagine glycans are attached at residues Asn29 and Asn62. Residues 81–102 (YINTVISCTIFIVGMVGNATLL) form a helical membrane-spanning segment. Topologically, residues 103–112 (RIIYQNKCMR) are cytoplasmic. Residues 113-132 (NGPNALIASLALGDLIYVVI) form a helical membrane-spanning segment. At 133–159 (DLPINVFKLLAGRWPFEQNDFGVFLCK) the chain is on the extracellular side. The cysteines at positions 158 and 239 are disulfide-linked. The chain crosses the membrane as a helical span at residues 160–181 (LFPFLQKSSVGITVLNLCALSV). Over 182 to 205 (DRYRAVASWSRVQGIGIPLVTAIE) the chain is Cytoplasmic. The helical transmembrane segment at 206–229 (IVSIWILSFILAIPEAIGFVMVPF) threads the bilayer. The Extracellular segment spans residues 230–256 (EYKGAQHRTCMLNATSKFMEFYQDVKD). The chain crosses the membrane as a helical span at residues 257 to 278 (WWLFGFYFCMPLVCTAIFYTLM). The Cytoplasmic portion of the chain corresponds to 279–306 (TCEMLNRRNGSLRIALSEHLKQRREVAK). The chain crosses the membrane as a helical span at residues 307 to 328 (TVFCLVVIFALCWFPLHLSRIL). At 329–347 (KKTVYDEMDTNRCELLSFL) the chain is on the extracellular side. The helical transmembrane segment at 348-372 (LLMDYIGINLATMNSCINPIALYFV) threads the bilayer. Residues 373–427 (SKKFKNCFQSCLCCCCYQSKSLMTSVPMNGTSIQWKNPEQNNHNTERSSHKDSIN) are Cytoplasmic-facing. Residues 405-415 (IQWKNPEQNNH) show a composition bias toward polar residues. The disordered stretch occupies residues 405-427 (IQWKNPEQNNHNTERSSHKDSIN). A compositionally biased stretch (basic and acidic residues) spans 416 to 427 (NTERSSHKDSIN). Ser425 bears the Phosphoserine mark.

This sequence belongs to the G-protein coupled receptor 1 family. Endothelin receptor subfamily. EDNRA sub-subfamily. Interacts with HDAC7 and KAT5.

It is found in the cell membrane. Its function is as follows. Receptor for endothelin-1. Mediates its action by association with G proteins that activate a phosphatidylinositol-calcium second messenger system. The rank order of binding affinities for ET-A is: ET1 &gt; ET2 &gt;&gt; ET3. The chain is Endothelin-1 receptor from Ovis aries (Sheep).